Reading from the N-terminus, the 374-residue chain is Putative zinc finger MYND domain-containing protein R331 (374 aa).

Residues C328, C331, C341, C344, C350, C354, H362, and C366 each contribute to the Zn(2+) site. The MYND-type zinc-finger motif lies at 328-366; it reads CFYCNKNIEKPVVCNKCFRIKYCSEKCQSEYNSYHSDDC.

This Acanthamoeba polyphaga (Amoeba) protein is Putative zinc finger MYND domain-containing protein R331.